The sequence spans 333 residues: Nucleoid-associated protein APL_0429 (333 aa).

It belongs to the YejK family.

Its subcellular location is the cytoplasm. The protein localises to the nucleoid. This chain is Nucleoid-associated protein APL_0429, found in Actinobacillus pleuropneumoniae serotype 5b (strain L20).